We begin with the raw amino-acid sequence, 1824 residues long: Afadin (1824 aa).

Residues F39–D133 form the Ras-associating 1 domain. Residues L128–E194 are disordered. The stretch at E146–D185 forms a coiled coil. Residues T160–R172 show a composition bias toward basic residues. The span at E173 to Q189 shows a compositional bias: basic and acidic residues. A phosphoserine mark is found at S216, S246, and S256. Positions S246–P348 constitute a Ras-associating 2 domain. Basic and acidic residues predominate over residues D349–D371. A disordered region spans residues D349–T378. S391 and S424 each carry phosphoserine. In terms of domain architecture, FHA spans T426–G492. S512, S557, S562, S589, and S655 each carry phosphoserine. The tract at residues F534–S595 is disordered. Over residues Q580–T591 the composition is skewed to basic and acidic residues. One can recognise a Dilute domain in the interval N668 to N908. The PDZ domain occupies I1007–G1093. Phosphoserine occurs at positions 1083, 1107, 1126, 1140, 1143, 1172, 1173, 1182, and 1199. A disordered region spans residues S1107–T1223. Over residues I1113–G1128 the composition is skewed to basic and acidic residues. Residues Y1132–S1143 show a composition bias toward polar residues. The span at S1152–S1172 shows a compositional bias: basic and acidic residues. Over residues A1190–Q1210 the composition is skewed to polar residues. Residues T1211 and T1232 each carry the phosphothreonine modification. Disordered regions lie at residues A1235–P1473, S1501–Q1528, and R1569–K1824. S1238 carries the post-translational modification Phosphoserine. Basic and acidic residues-rich tracts occupy residues Y1252–S1262 and R1274–S1302. At S1275 the chain carries Phosphoserine. Over residues S1309–S1318 the composition is skewed to low complexity. Polar residues predominate over residues S1325–K1337. S1328 is subject to Phosphoserine. T1330 carries the post-translational modification Phosphothreonine. Positions T1345–V1356 are enriched in low complexity. Positions L1364 to V1373 are enriched in pro residues. Basic and acidic residues predominate over residues A1407–L1441. Residues E1408–S1448 adopt a coiled-coil conformation. Phosphoserine is present on residues S1501 and S1512. Over residues P1515–Q1528 the composition is skewed to basic and acidic residues. Positions K1523–Q1667 form a coiled coil. Over residues E1578–D1589 the composition is skewed to acidic residues. Residues L1597 to E1677 show a composition bias toward basic and acidic residues. The span at P1694–Q1709 shows a compositional bias: pro residues. Phosphoserine occurs at positions 1696, 1721, 1774, 1779, and 1799. Residues D1762 to D1776 are compositionally biased toward basic and acidic residues. K1807 bears the N6-acetyllysine mark. Residues K1813 to K1824 show a composition bias toward basic and acidic residues.

In terms of assembly, homodimer. Interacts with F-actin, nectin and NECTIN3. Essential for the association of nectin and E-cadherin. Isoform 1/s-afadin does not interact with F-actin. Interacts with ZO-1 and occludin, but probably in an indirect manner. Interacts with RIT1 and RIT2. Interacts with NRXN1 and BCR. Interacts with ADAM10; the interaction locks ADAM10 at adherens junctions following ADAM10 recruitment to adherens junctions by TSPAN33.

The protein resides in the cell junction. It is found in the adherens junction. Functionally, belongs to an adhesion system, probably together with the E-cadherin-catenin system, which plays a role in the organization of homotypic, interneuronal and heterotypic cell-cell adherens junctions (AJs). Nectin- and actin-filament-binding protein that connects nectin to the actin cytoskeleton. May play a key role in the organization of epithelial structures of the embryonic ectoderm. Essential for the organization of adherens junctions. In Homo sapiens (Human), this protein is Afadin.